The following is a 273-amino-acid chain: Type II iodothyronine deiodinase (273 aa).

At 1 to 9 (MGILSVDLL) the chain is on the lumenal side. The helical; Signal-anchor for type III membrane protein transmembrane segment at 10-34 (ITLQILPVFFSNCLFLALYDSVILL) threads the bilayer. Topologically, residues 35-273 (KHVVLLLSRS…KRUKKTRLAG (239 aa)) are cytoplasmic. U133 is a catalytic residue. Residues U133 and U266 are each a non-standard amino acid (selenocysteine).

Belongs to the iodothyronine deiodinase family. Predominantly monomer. Can form homodimers but homodimerization is not essential for enzyme activity. Interacts with USP20 and USP33. Interacts with MARCHF6. Ubiquitinated by MARCHF6, leading to its degradation by the proteasome. Deubiquitinated by USP20 and USP33. As to expression, isoform 1 is expressed in the lung, trachea, kidney, heart, skeletal muscle, placenta, fetal brain and several regions of the adult brain. Isoform 2 is expressed in the brain, heart, kidney and trachea.

The protein localises to the endoplasmic reticulum membrane. It carries out the reaction 3,3',5-triiodo-L-thyronine + iodide + A + H(+) = L-thyroxine + AH2. The catalysed reaction is 3,3'-diiodo-L-thyronine + iodide + A + H(+) = 3,3',5'-triiodo-L-thyronine + AH2. It catalyses the reaction 3'-iodo-L-thyronine + iodide + A + H(+) = 3',5'-diiodo-L-thyronine + AH2. The enzyme catalyses 3,3'-diiodothyronamine + iodide + A + H(+) = 3,3',5'-triiodothyronamine + AH2. It carries out the reaction 3'-iodothyronamine + iodide + A + H(+) = 3',5'-diiodothyronamine + AH2. In terms of biological role, plays a crucial role in the metabolism of thyroid hormones (TH) and has specific roles in TH activation and inactivation by deiodination. Catalyzes the deiodination of L-thyroxine (T4) to 3,5,3'-triiodothyronine (T3), 3,3',5'-triiodothyronine (rT3) to 3,3'-diiodothyronine (3,3'-T2) and 3',5'-diiodothyronine (3',5'-T2) to 3'-monoiodothyronine (3'-T1) via outer-ring deiodination (ORD). Catalyzes the phenolic ring deiodinations of 3,3',5'-triiodothyronamine and 3',5'- diiodothyronamine. This Homo sapiens (Human) protein is Type II iodothyronine deiodinase (DIO2).